The primary structure comprises 77 residues: Large ribosomal subunit protein bL28 (77 aa).

The segment at 1 to 25 is disordered; the sequence is MARVCQVTGKAPMSGNNVSHANNKT.

Belongs to the bacterial ribosomal protein bL28 family.

This Paraburkholderia phytofirmans (strain DSM 17436 / LMG 22146 / PsJN) (Burkholderia phytofirmans) protein is Large ribosomal subunit protein bL28.